A 911-amino-acid polypeptide reads, in one-letter code: Anoctamin-6 (911 aa).

Residues 1–301 lie on the Cytoplasmic side of the membrane; sequence MQMMTRKVLL…YGEKIGIYFA (301 aa). Residues 302 to 322 traverse the membrane as a helical segment; it reads WLGYYTQMLLLAAVVGVACFL. Over 323 to 376 the chain is Extracellular; sequence YGYLDQDNCTWSKEVCDPDIGGQILMCPQCDRLCPFWRLNITCESSKKLCIFDS. Residue asparagine 330 is glycosylated (N-linked (GlcNAc...) asparagine). Disulfide bonds link cysteine 331–cysteine 372, cysteine 338–cysteine 365, cysteine 349–cysteine 807, cysteine 352–cysteine 356, and cysteine 596–cysteine 601. Asparagine 362 carries N-linked (GlcNAc...) asparagine glycosylation. The helical transmembrane segment at 377–397 threads the bilayer; sequence FGTLIFAVFMGVWVTLFLEFW. Topologically, residues 398–456 are cytoplasmic; the sequence is KRRQAELEYEWDTVELQQEEQARPEYEAQCNHVVINEITQEEERIPFTTCGKCIRVTLC. The chain crosses the membrane as a helical span at residues 457–477; the sequence is ASAVFFWILLIIASVIGIIVY. Residues 478–510 lie on the Extracellular side of the membrane; it reads RLSVFIVFSTTLPKNPNGTDPIQKYLTPQMATS. Asparagine 494 carries N-linked (GlcNAc...) asparagine glycosylation. The helical transmembrane segment at 511-531 threads the bilayer; sequence ITASIISFIIIMILNTIYEKV. Residues 532-552 lie on the Cytoplasmic side of the membrane; that stretch reads AIMITNFELPRTQTDYENSLT. A helical transmembrane segment spans residues 553–573; it reads MKMFLFQFVNYYSSCFYIAFF. The Extracellular segment spans residues 574-602; that stretch reads KGKFVGYPGDPVYLLGKYRSEECDPGGCL. The helical transmembrane segment at 603–622 threads the bilayer; that stretch reads LELTTQLTIIMGGKAIWNNI. Over 623–664 the chain is Cytoplasmic; it reads QEVLLPWVMNLIGRYKRVSGSEKITPRWEQDYHLQPMGKLGL. 3 residues coordinate Ca(2+): glutamate 624, glutamate 667, and glutamate 670. 2 consecutive transmembrane segments (helical) span residues 665 to 685 and 686 to 706; these read FYEYLEMIIQFGFVTLFVASF and PLAPLLALVNNILEIRVDAWK. Residues 707-723 are Cytoplasmic-facing; sequence LTTQFRRMVPEKAQDIG. Residues 724–744 form a helical membrane-spanning segment; the sequence is AWQPIMQGIAILAVVTNAMII. Topologically, residues 745-837 are extracellular; it reads AFTSDMIPRL…YWHVIAAKLA (93 aa). N-linked (GlcNAc...) asparagine glycosylation is found at asparagine 778, asparagine 785, and asparagine 803. A helical transmembrane segment spans residues 838–858; sequence FIIVMEHIIYSVKFFISYAIP. Residues 859–911 are Cytoplasmic-facing; that stretch reads DVSKITKSKIKREKYLTQKLLHESHLKDLTKNMGIIAERIGGTVDNSVRPKLE.

Belongs to the anoctamin family. Homodimer. Predominant expression seen in epithelial tissues. Also found in skeletal system where it is primarily expressed in osteoblasts.

Its subcellular location is the cell membrane. It carries out the reaction a 1,2-diacyl-sn-glycero-3-phospho-L-serine(in) = a 1,2-diacyl-sn-glycero-3-phospho-L-serine(out). The catalysed reaction is a beta-D-galactosyl-(1&lt;-&gt;1')-N-acylsphing-4-enine(out) = a beta-D-galactosyl-(1&lt;-&gt;1')-N-acylsphing-4-enine(in). The enzyme catalyses a 1,2-diacyl-sn-glycero-3-phosphocholine(in) = a 1,2-diacyl-sn-glycero-3-phosphocholine(out). With respect to regulation, exhibits synergistic gating by Ca(2+) and voltage. Inhibited by some non-specific cation channel blockers such as: ruthenium red, 2-aminoethyl diphenylborinate (2APB), gadolinium and cadmium ions. In terms of biological role, small-conductance calcium-activated nonselective cation (SCAN) channel which acts as a regulator of phospholipid scrambling in platelets, osteoblasts and fetal thymocytes. Phospholipid scrambling results in surface exposure of phosphatidylserine which in platelets is essential to trigger the clotting system whereas in osteoblasts is essential for the deposition of hydroxyapatite during bone mineralization. Has calcium-dependent phospholipid scramblase activity; scrambles phosphatidylserine, phosphatidylcholine and galactosylceramide. Can generate outwardly rectifying chloride channel currents in airway epithelial cells and Jurkat T lymphocytes. The polypeptide is Anoctamin-6 (Ano6) (Mus musculus (Mouse)).